A 274-amino-acid chain; its full sequence is Peroxiredoxin-4 (274 aa).

Positions 1–40 are cleaved as a signal peptide; that stretch reads MEAPPPPPPLPATTLAPGRSRKLLLLPLLLFLLRAEAVRG. Positions 82-240 constitute a Thioredoxin domain; that stretch reads AKISKPAPYW…TLRLVQAFQY (159 aa). The Cysteine sulfenic acid (-SOH) intermediate role is filled by Cys-127.

Belongs to the peroxiredoxin family. AhpC/Prx1 subfamily. Homodimer; disulfide-linked, upon oxidation. 5 homodimers assemble to form a ring-like decamer. In terms of processing, the enzyme can be inactivated by further oxidation of the cysteine sulfenic acid (C(P)-SOH) to sulphinic acid (C(P)-SO2H) and sulphonic acid (C(P)-SO3H) instead of its condensation to a disulfide bond.

It is found in the cytoplasm. Its subcellular location is the endoplasmic reticulum. It carries out the reaction a hydroperoxide + [thioredoxin]-dithiol = an alcohol + [thioredoxin]-disulfide + H2O. Its function is as follows. Thiol-specific peroxidase that catalyzes the reduction of hydrogen peroxide and organic hydroperoxides to water and alcohols, respectively. Plays a role in cell protection against oxidative stress by detoxifying peroxides and as sensor of hydrogen peroxide-mediated signaling events. Regulates the activation of NF-kappa-B in the cytosol by a modulation of I-kappa-B-alpha phosphorylation. The sequence is that of Peroxiredoxin-4 (PRDX4) from Bos taurus (Bovine).